We begin with the raw amino-acid sequence, 42 residues long: Serine protease inhibitor 8 (42 aa).

This sequence belongs to the protease inhibitor I3 (leguminous Kunitz-type inhibitor) family. In terms of tissue distribution, cortex of potato tuber.

Its function is as follows. Potent inhibitor of animal pancreatic trypsin (serine protease). The protein is Serine protease inhibitor 8 of Solanum tuberosum (Potato).